The sequence spans 572 residues: 2-isopropylmalate synthase (572 aa).

A Pyruvate carboxyltransferase domain is found at proline 31–asparagine 305. Positions 40, 244, 246, and 280 each coordinate Mg(2+). Positions asparagine 437–valine 572 are regulatory domain.

It belongs to the alpha-IPM synthase/homocitrate synthase family. LeuA type 2 subfamily. In terms of assembly, homodimer. It depends on Mg(2+) as a cofactor.

Its subcellular location is the cytoplasm. It carries out the reaction 3-methyl-2-oxobutanoate + acetyl-CoA + H2O = (2S)-2-isopropylmalate + CoA + H(+). Its pathway is amino-acid biosynthesis; L-leucine biosynthesis; L-leucine from 3-methyl-2-oxobutanoate: step 1/4. Functionally, catalyzes the condensation of the acetyl group of acetyl-CoA with 3-methyl-2-oxobutanoate (2-ketoisovalerate) to form 3-carboxy-3-hydroxy-4-methylpentanoate (2-isopropylmalate). This is 2-isopropylmalate synthase from Paraburkholderia xenovorans (strain LB400).